The chain runs to 550 residues: Hydroxylamine reductase (550 aa).

C3, C6, C18, and C25 together coordinate [2Fe-2S] cluster. Hybrid [4Fe-2O-2S] cluster contacts are provided by H249, E273, C317, C405, C433, C458, E492, and K494. A Cysteine persulfide modification is found at C405.

It belongs to the HCP family. Requires [2Fe-2S] cluster as cofactor. It depends on hybrid [4Fe-2O-2S] cluster as a cofactor.

It localises to the cytoplasm. The enzyme catalyses A + NH4(+) + H2O = hydroxylamine + AH2 + H(+). In terms of biological role, catalyzes the reduction of hydroxylamine to form NH(3) and H(2)O. This Salmonella schwarzengrund (strain CVM19633) protein is Hydroxylamine reductase.